Reading from the N-terminus, the 610-residue chain is UvrABC system protein C (610 aa).

In terms of domain architecture, GIY-YIG spans 16 to 94 (HQPGVYRMYN…IKQYLPKYNV (79 aa)). In terms of domain architecture, UVR spans 204 to 239 (QQVLKQLIEKMEVASQQLRFEDAAKFRDQIQAIRRV).

The protein belongs to the UvrC family. In terms of assembly, interacts with UvrB in an incision complex.

Its subcellular location is the cytoplasm. Functionally, the UvrABC repair system catalyzes the recognition and processing of DNA lesions. UvrC both incises the 5' and 3' sides of the lesion. The N-terminal half is responsible for the 3' incision and the C-terminal half is responsible for the 5' incision. In Vibrio parahaemolyticus serotype O3:K6 (strain RIMD 2210633), this protein is UvrABC system protein C.